An 82-amino-acid chain; its full sequence is Small ribosomal subunit protein eS27 (82 aa).

Zn(2+) is bound by residues Cys-37, Cys-40, Cys-56, and Cys-59.

The protein belongs to the eukaryotic ribosomal protein eS27 family. As to quaternary structure, component of the small ribosomal subunit. Mature ribosomes consist of a small (40S) and a large (60S) subunit. The 40S subunit contains about 32 different proteins and 1 molecule of RNA (18S). The 60S subunit contains 45 different proteins and 3 molecules of RNA (25S, 5.8S and 5S). It depends on Zn(2+) as a cofactor.

Its subcellular location is the cytoplasm. Component of the ribosome, a large ribonucleoprotein complex responsible for the synthesis of proteins in the cell. The small ribosomal subunit (SSU) binds messenger RNAs (mRNAs) and translates the encoded message by selecting cognate aminoacyl-transfer RNA (tRNA) molecules. The large subunit (LSU) contains the ribosomal catalytic site termed the peptidyl transferase center (PTC), which catalyzes the formation of peptide bonds, thereby polymerizing the amino acids delivered by tRNAs into a polypeptide chain. The nascent polypeptides leave the ribosome through a tunnel in the LSU and interact with protein factors that function in enzymatic processing, targeting, and the membrane insertion of nascent chains at the exit of the ribosomal tunnel. The protein is Small ribosomal subunit protein eS27 (RPS27) of Candida albicans (strain SC5314 / ATCC MYA-2876) (Yeast).